The primary structure comprises 465 residues: Cysteine--tRNA ligase (465 aa).

Residue Cys27 participates in Zn(2+) binding. Residues 29-39 carry the 'HIGH' region motif; that stretch reads PTVYNFFHIGN. Cys207, His232, and Glu236 together coordinate Zn(2+). The 'KMSKS' region motif lies at 264–268; that stretch reads KMSKS. Position 267 (Lys267) interacts with ATP.

This sequence belongs to the class-I aminoacyl-tRNA synthetase family. In terms of assembly, monomer. It depends on Zn(2+) as a cofactor.

The protein resides in the cytoplasm. The enzyme catalyses tRNA(Cys) + L-cysteine + ATP = L-cysteinyl-tRNA(Cys) + AMP + diphosphate. This is Cysteine--tRNA ligase from Clostridium kluyveri (strain NBRC 12016).